We begin with the raw amino-acid sequence, 154 residues long: UPF0756 membrane protein EAT1b_0668 (154 aa).

The next 5 helical transmembrane spans lie at 5 to 25, 52 to 72, 82 to 102, 107 to 127, and 129 to 149; these read LFLL…VIIA, WGVT…DIGF, PVGI…GQGV, VDPV…GFMK, and IPVG…GYQV.

Belongs to the UPF0756 family.

It localises to the cell membrane. The chain is UPF0756 membrane protein EAT1b_0668 from Exiguobacterium sp. (strain ATCC BAA-1283 / AT1b).